Here is a 63-residue protein sequence, read N- to C-terminus: Protein virE1 (63 aa).

Forms heterodimers with virE2 that prevent virE2 anarchic homopolymerization and binding to DNA.

Functionally, involved in DNA transformation; controls virE2 polymerization and prevents virE2 binding to DNA. This Agrobacterium fabrum (strain C58 / ATCC 33970) (Agrobacterium tumefaciens (strain C58)) protein is Protein virE1 (virE1).